Reading from the N-terminus, the 375-residue chain is Succinyl-diaminopimelate desuccinylase (375 aa).

Zn(2+) is bound at residue His66. Asp68 is an active-site residue. Asp99 is a binding site for Zn(2+). The active-site Proton acceptor is the Glu133. Residues Glu134, Glu162, and His348 each contribute to the Zn(2+) site.

This sequence belongs to the peptidase M20A family. DapE subfamily. Homodimer. Zn(2+) serves as cofactor. The cofactor is Co(2+).

It catalyses the reaction N-succinyl-(2S,6S)-2,6-diaminopimelate + H2O = (2S,6S)-2,6-diaminopimelate + succinate. Its pathway is amino-acid biosynthesis; L-lysine biosynthesis via DAP pathway; LL-2,6-diaminopimelate from (S)-tetrahydrodipicolinate (succinylase route): step 3/3. Its function is as follows. Catalyzes the hydrolysis of N-succinyl-L,L-diaminopimelic acid (SDAP), forming succinate and LL-2,6-diaminopimelate (DAP), an intermediate involved in the bacterial biosynthesis of lysine and meso-diaminopimelic acid, an essential component of bacterial cell walls. This chain is Succinyl-diaminopimelate desuccinylase, found in Yersinia pseudotuberculosis serotype O:1b (strain IP 31758).